Here is a 286-residue protein sequence, read N- to C-terminus: UDP-3-O-acyl-N-acetylglucosamine deacetylase (286 aa).

Zn(2+) is bound by residues His-79, His-237, and Asp-241. His-264 functions as the Proton donor in the catalytic mechanism.

Belongs to the LpxC family. It depends on Zn(2+) as a cofactor.

It catalyses the reaction a UDP-3-O-[(3R)-3-hydroxyacyl]-N-acetyl-alpha-D-glucosamine + H2O = a UDP-3-O-[(3R)-3-hydroxyacyl]-alpha-D-glucosamine + acetate. The protein operates within glycolipid biosynthesis; lipid IV(A) biosynthesis; lipid IV(A) from (3R)-3-hydroxytetradecanoyl-[acyl-carrier-protein] and UDP-N-acetyl-alpha-D-glucosamine: step 2/6. In terms of biological role, catalyzes the hydrolysis of UDP-3-O-myristoyl-N-acetylglucosamine to form UDP-3-O-myristoylglucosamine and acetate, the committed step in lipid A biosynthesis. The chain is UDP-3-O-acyl-N-acetylglucosamine deacetylase from Chlamydia trachomatis serovar L2 (strain ATCC VR-902B / DSM 19102 / 434/Bu).